The primary structure comprises 636 residues: Probable Xaa-Pro aminopeptidase P (636 aa).

Mn(2+)-binding residues include Asp414, Asp425, Glu523, and Glu537.

The protein belongs to the peptidase M24B family. Mn(2+) serves as cofactor.

It catalyses the reaction Release of any N-terminal amino acid, including proline, that is linked to proline, even from a dipeptide or tripeptide.. In terms of biological role, catalyzes the removal of a penultimate prolyl residue from the N-termini of peptides. The chain is Probable Xaa-Pro aminopeptidase P (AMPP) from Ajellomyces capsulatus (strain H143) (Darling's disease fungus).